The sequence spans 335 residues: Pharynx and intestine in excess protein 1 (335 aa).

A Glycyl lysine isopeptide (Lys-Gly) (interchain with G-Cter in SUMO) cross-link involves residue Lys-68. The C3H1-type 1 zinc finger occupies Glu-98–Asp-126. Positions Val-130–Val-156 are enriched in basic and acidic residues. The segment at Val-130–Gln-188 is disordered. Polar residues-rich tracts occupy residues Thr-158 to Ala-167 and Pro-177 to Arg-187. A C3H1-type 2 zinc finger spans residues Ser-184 to Gln-211. The required for inhibition of Ser-2 phosphorylation stretch occupies residues Met-288–Thr-291.

Interacts with hda-1, let-418 and mep-1. Interacts (via C terminus) with cit-1.1 (via C terminus). In terms of processing, sumoylated in adult germ cells.

The protein resides in the nucleus. It is found in the cytoplasm. Its subcellular location is the cytoskeleton. The protein localises to the microtubule organizing center. It localises to the centrosome. The protein resides in the spindle. It is found in the cytoplasmic granule. Functionally, maternally provided pie-1 is required for germline cell fate determination. Functions as a repressor of RNA polymerase II-dependent gene expression in the developing germline. Required for expression of nos-2 in P4 germline blastomere cells. Inhibits the histone deacetylase activity of hda-1. Represses transcriptional activation of cdk-9 and cit-1.1, which are members of the P-TEFb complex. Acts redundantly with gei-17 to promote piRNA-mediated silencing and fertility in adult germline. Promotes the sumoylation of hda-1 in adult animals but not in embryos thereby regulating its interaction with mep-1. The polypeptide is Pharynx and intestine in excess protein 1 (Caenorhabditis elegans).